Consider the following 1157-residue polypeptide: ATP-dependent helicase/deoxyribonuclease subunit B (1157 aa).

The region spanning 1–275 is the UvrD-like helicase ATP-binding domain; that stretch reads MTLHAYLGRA…QYFNQLYRFN (275 aa). 8-15 contacts ATP; the sequence is GRAGTGKS. The 315-residue stretch at 269 to 583 folds into the UvrD-like helicase C-terminal domain; that stretch reads NQLYRFNNQD…SIGTMDLAKV (315 aa). Residues Cys784, Cys1112, Cys1115, and Cys1121 each coordinate [4Fe-4S] cluster.

It belongs to the helicase family. AddB/RexB type 1 subfamily. As to quaternary structure, heterodimer of AddA and AddB. It depends on Mg(2+) as a cofactor. [4Fe-4S] cluster serves as cofactor.

In terms of biological role, the heterodimer acts as both an ATP-dependent DNA helicase and an ATP-dependent, dual-direction single-stranded exonuclease. Recognizes the chi site generating a DNA molecule suitable for the initiation of homologous recombination. The AddB subunit has 5' -&gt; 3' nuclease activity but not helicase activity. In Staphylococcus aureus (strain JH9), this protein is ATP-dependent helicase/deoxyribonuclease subunit B.